The chain runs to 414 residues: GA-binding protein subunit beta-2 (414 aa).

ANK repeat units lie at residues 5–34 (DLGK…PFTT), 37–66 (LGTS…SRDA), 70–99 (VDRT…DVNA), 103–132 (LQMT…DVYA), and 136–166 (FDKS…QVNT). Phosphoserine is present on S218. Positions 310–362 (EEMKEGSERELLQQQLQEANRRAQEYRHQLLKKEQEAEQYRLRLEAMAQQQTN) form a coiled coil.

Heterotetramer of two alpha and two beta subunits. The C-terminal is necessary for the formation of a heterotetrameric GABP-alpha-2/beta-2 complex, and also facilitates homotypic dimerization. Interacts with ADGRB2. As to expression, high levels in thymus, spleen, kidney and intestine.

The protein localises to the nucleus. Its function is as follows. Transcription factor capable of interacting with purine rich repeats (GA repeats). Must associate with GABP-alpha to bind DNA. The polypeptide is GA-binding protein subunit beta-2 (Gabpb2) (Mus musculus (Mouse)).